The chain runs to 217 residues: Translation initiation factor 6 (217 aa).

This sequence belongs to the eIF-6 family.

Its function is as follows. Binds to the 50S ribosomal subunit and prevents its association with the 30S ribosomal subunit to form the 70S initiation complex. The sequence is that of Translation initiation factor 6 from Picrophilus torridus (strain ATCC 700027 / DSM 9790 / JCM 10055 / NBRC 100828 / KAW 2/3).